A 1227-amino-acid chain; its full sequence is Sterol 3-beta-glucosyltransferase (1227 aa).

2 disordered regions span residues 1–76 (MLKG…AASP) and 104–189 (QLAT…MTSK). Basic and acidic residues predominate over residues 48-57 (KHKEAERRLT). Acidic residues predominate over residues 114 to 135 (AGADETEDEMDEAGDETGDDAD). The segment covering 154–171 (ESRRSTLFELSIEPHPES) has biased composition (basic and acidic residues). A compositionally biased stretch (basic residues) spans 179–189 (TKNRRSRMTSK). The GRAM 1 domain maps to 188–229 (SKLRSKFNLDDDEELVREYPCWLLRDVLIQGHIYLTSRNLLF). A PH domain is found at 239-342 (SARLTGNLSI…WSSALKKQVF (104 aa)). The span at 449-469 (DAAIASEAAADAAAADTASHS) shows a compositional bias: low complexity. Disordered stretches follow at residues 449–484 (DAAI…RSTE) and 523–550 (TLKL…LESR). One can recognise a GRAM 2 domain in the interval 602–668 (KRFKAHFSLT…HDVENCYKEQ (67 aa)). Residues Ser-786, Arg-787, Asp-789, Asn-1060, Asn-1088, Val-1089, His-1091, His-1104, Ser-1107, Gly-1108, Thr-1109, Asp-1128, and Gln-1129 each coordinate UDP-alpha-D-glucose.

This sequence belongs to the glycosyltransferase 28 family.

The protein localises to the cytoplasm. It is found in the membrane. The catalysed reaction is a sterol + UDP-alpha-D-glucose = a sterol 3-beta-D-glucoside + UDP + H(+). It carries out the reaction ergosterol + UDP-alpha-D-glucose = ergosteryl 3-beta-D-glucoside + UDP + H(+). In terms of biological role, sterol glycosyltransferase responsible for the glycosylation of ergosterol to form ergosterol-glucoside. The polypeptide is Sterol 3-beta-glucosyltransferase (Eremothecium gossypii (strain ATCC 10895 / CBS 109.51 / FGSC 9923 / NRRL Y-1056) (Yeast)).